A 511-amino-acid polypeptide reads, in one-letter code: Adenosine deaminase 2 (511 aa).

Positions 1–29 (MLVDGPSERPALCFLLLAVAMSFFGSALS) are cleaved as a signal peptide. The dimerization stretch occupies residues 30–100 (IDETRAHLLL…HLIERSQVFN (71 aa)). Positions 112 and 114 each coordinate Zn(2+). Asp115 contributes to the substrate binding site. A glycan (N-linked (GlcNAc...) asparagine) is linked at Asn127. The segment at 127–185 (NVTYRPHCHICFTPRGIMQFRFAHPTPRPSEKCSKWILLEDYRKRVQNVTEFDDSLLRN) is PRB domain. Cysteines 137 and 159 form a disulfide. N-linked (GlcNAc...) asparagine glycans are attached at residues Asn174 and Asn185. Residues 204–211 (WSKFETIF), His293, and Gly326 each bind substrate. His356 contacts Zn(2+). Glu359 (proton donor) is an active-site residue. N-linked (GlcNAc...) asparagine glycosylation occurs at Asn378. His384 serves as the catalytic Proton acceptor. A Zn(2+)-binding site is contributed by Asp441. Asp442 is a substrate binding site.

Belongs to the metallo-dependent hydrolases superfamily. Adenosine and AMP deaminases family. ADGF subfamily. Homodimer. Interacts with adenosine receptors. Binds heparin. It depends on Zn(2+) as a cofactor. Detected in blood plasma (at protein level). Widely expressed, with most abundant expression in human adult heart, lung, lymphoblasts, and placenta as well as fetal lung, liver, and kidney. In embryo, expressed in the outflow tract and atrium of the developing heart, the VII/VIII cranial nerve ganglion, and the notochord.

Its subcellular location is the secreted. The catalysed reaction is adenosine + H2O + H(+) = inosine + NH4(+). Adenosine deaminase that may contribute to the degradation of extracellular adenosine, a signaling molecule that controls a variety of cellular responses. Requires elevated adenosine levels for optimal enzyme activity. Binds to cell surfaces via proteoglycans and may play a role in the regulation of cell proliferation and differentiation, independently of its enzyme activity. In Homo sapiens (Human), this protein is Adenosine deaminase 2.